The primary structure comprises 526 residues: Light-independent protochlorophyllide reductase subunit B (526 aa).

Residue aspartate 36 coordinates [4Fe-4S] cluster. Catalysis depends on aspartate 284, which acts as the Proton donor. 419–420 (GL) contacts substrate.

The protein belongs to the ChlB/BchB/BchZ family. As to quaternary structure, protochlorophyllide reductase is composed of three subunits; BchL, BchN and BchB. Forms a heterotetramer of two BchB and two BchN subunits. [4Fe-4S] cluster is required as a cofactor.

The enzyme catalyses chlorophyllide a + oxidized 2[4Fe-4S]-[ferredoxin] + 2 ADP + 2 phosphate = protochlorophyllide a + reduced 2[4Fe-4S]-[ferredoxin] + 2 ATP + 2 H2O. Its pathway is porphyrin-containing compound metabolism; bacteriochlorophyll biosynthesis (light-independent). Functionally, component of the dark-operative protochlorophyllide reductase (DPOR) that uses Mg-ATP and reduced ferredoxin to reduce ring D of protochlorophyllide (Pchlide) to form chlorophyllide a (Chlide). This reaction is light-independent. The NB-protein (BchN-BchB) is the catalytic component of the complex. The sequence is that of Light-independent protochlorophyllide reductase subunit B from Halorhodospira halophila (strain DSM 244 / SL1) (Ectothiorhodospira halophila (strain DSM 244 / SL1)).